The following is a 658-amino-acid chain: L-type lectin-domain containing receptor kinase V.4 (658 aa).

A signal peptide spans 1–25; the sequence is MSRTIGSRVIFLILALFCCTENSRG. Positions 26-248 are legume-lectin like; that stretch reads KLVMQGSAGF…RAMHYMLSWF (223 aa). Topologically, residues 26 to 280 are extracellular; that stretch reads KLVMQGSAGF…EKSLVYRIVL (255 aa). N-linked (GlcNAc...) asparagine glycans are attached at residues Asn-66 and Asn-196. The helical transmembrane segment at 281-301 threads the bilayer; that stretch reads VTSLALVLFVALVASALSIFF. The Cytoplasmic portion of the chain corresponds to 302–658; the sequence is YRRHKKVKEV…LTEPFTSRGR (357 aa). Residues 334-592 form the Protein kinase domain; the sequence is KGFKQLLGKG…LGVLCSHQAV (259 aa). ATP-binding positions include 340–348 and Lys-363; that span reads LGKGGFGQV. The Proton acceptor role is filled by Asp-460.

The protein in the C-terminal section; belongs to the protein kinase superfamily. Ser/Thr protein kinase family. This sequence in the N-terminal section; belongs to the leguminous lectin family.

It is found in the cell membrane. The catalysed reaction is L-seryl-[protein] + ATP = O-phospho-L-seryl-[protein] + ADP + H(+). It carries out the reaction L-threonyl-[protein] + ATP = O-phospho-L-threonyl-[protein] + ADP + H(+). Involved in resistance response to the pathogenic oomycetes Phytophthora infestans and Phytophthora capsici and to the pathogenic bacteria Pseudomonas syringae. The protein is L-type lectin-domain containing receptor kinase V.4 of Arabidopsis thaliana (Mouse-ear cress).